The following is a 103-amino-acid chain: Large ribosomal subunit protein uL24 (103 aa).

Belongs to the universal ribosomal protein uL24 family. Part of the 50S ribosomal subunit.

Functionally, one of two assembly initiator proteins, it binds directly to the 5'-end of the 23S rRNA, where it nucleates assembly of the 50S subunit. In terms of biological role, one of the proteins that surrounds the polypeptide exit tunnel on the outside of the subunit. The polypeptide is Large ribosomal subunit protein uL24 (Pasteurella multocida (strain Pm70)).